The chain runs to 137 residues: Fructose-bisphosphate aldolase C (137 aa).

Lys3 acts as the Schiff-base intermediate with dihydroxyacetone-P in catalysis.

This sequence belongs to the class I fructose-bisphosphate aldolase family. In terms of assembly, homotetramer.

It carries out the reaction beta-D-fructose 1,6-bisphosphate = D-glyceraldehyde 3-phosphate + dihydroxyacetone phosphate. The protein operates within carbohydrate degradation; glycolysis; D-glyceraldehyde 3-phosphate and glycerone phosphate from D-glucose: step 4/4. This Gallus gallus (Chicken) protein is Fructose-bisphosphate aldolase C (ALDOC).